The primary structure comprises 402 residues: La-related protein 7 homolog (402 aa).

An HTH La-type RNA-binding-like region region spans residues 64–138; the sequence is EPLNPDFLSA…FDNSSHMVIR (75 aa). Positions 148–230 are RRM-like region; sequence IPLYDRIIYV…LTRKEWTNRE (83 aa). The tract at residues 288–400 is xRRM-like region; sequence DFTKNLLTRI…EEEKNYWRML (113 aa). The xRRM domain occupies 288–402; the sequence is DFTKNLLTRI…EKNYWRMLKK (115 aa).

The protein belongs to the LARP7 family. Component of the telomerase holoenzyme complex composed minimally of trt1 and the telomerase RNA template component. Interacts with skp1.

It is found in the chromosome. The protein resides in the telomere. Its subcellular location is the nucleus. It localises to the cytoplasm. Its function is as follows. RNA-binding protein required for assembly of the holoenzyme telomerase ribonucleoprotein (RNP) complex. Specifically binds telomerase RNA ter1 and promotes assembly of ter1 with catalytic subunit trt1. Telomerase is a ribonucleoprotein enzyme essential that copies new telomeric repeats onto chromosome ends and functions to maintain cell division. The sequence is that of La-related protein 7 homolog from Schizosaccharomyces pombe (strain 972 / ATCC 24843) (Fission yeast).